The sequence spans 98 residues: NADH-ubiquinone oxidoreductase chain 4L (98 aa).

3 helical membrane-spanning segments follow: residues 1 to 21, 29 to 49, and 61 to 81; these read MTLI…GLLM, ALLC…LTIL, and IILL…LVMV.

This sequence belongs to the complex I subunit 4L family. In terms of assembly, core subunit of respiratory chain NADH dehydrogenase (Complex I) which is composed of 45 different subunits.

It localises to the mitochondrion inner membrane. The enzyme catalyses a ubiquinone + NADH + 5 H(+)(in) = a ubiquinol + NAD(+) + 4 H(+)(out). In terms of biological role, core subunit of the mitochondrial membrane respiratory chain NADH dehydrogenase (Complex I) which catalyzes electron transfer from NADH through the respiratory chain, using ubiquinone as an electron acceptor. Part of the enzyme membrane arm which is embedded in the lipid bilayer and involved in proton translocation. This is NADH-ubiquinone oxidoreductase chain 4L (MT-ND4L) from Megaptera novaeangliae (Humpback whale).